The sequence spans 456 residues: Phospholipase A1 member A (456 aa).

An N-terminal signal peptide occupies residues 1–25 (MPPGPWESCFWVGGLLLWLSVGSSG). The active-site Nucleophile is serine 166. Residue aspartate 190 is the Charge relay system of the active site. Cysteine 245 and cysteine 258 form a disulfide bridge. Histidine 260 serves as the catalytic Charge relay system. Cystine bridges form between cysteine 282–cysteine 293 and cysteine 296–cysteine 304. Residue asparagine 365 is glycosylated (N-linked (GlcNAc...) asparagine).

It belongs to the AB hydrolase superfamily. Lipase family.

Its subcellular location is the secreted. The enzyme catalyses a 1,2-diacyl-sn-glycero-3-phospho-L-serine + H2O = a 2-acyl-sn-glycero-3-phospho-L-serine + a fatty acid + H(+). The catalysed reaction is 1,2-di-(9Z)-octadecenoyl-sn-glycero-3-phospho-L-serine + H2O = 2-(9Z-octadecenoyl)-sn-glycero-3-phospho-L-serine + (9Z)-octadecenoate + H(+). It catalyses the reaction 1-hexadecanoyl-2-(5Z,8Z,11Z,14Z-eicosatetraenoyl)-sn-glycero-3-phospho-L-serine + H2O = 2-(5Z,8Z,11Z,14Z)-eicosatetraenoyl-sn-glycero-3-phospho-L-serine + hexadecanoate + H(+). It carries out the reaction a 1-acyl-sn-glycero-3-phospho-L-serine + H2O = sn-glycero-3-phospho-L-serine + a fatty acid + H(+). The enzyme catalyses 1-(9Z-octadecenoyl)-sn-glycero-3-phospho-L-serine + H2O = sn-glycero-3-phospho-L-serine + (9Z)-octadecenoate + H(+). Functionally, hydrolyzes the ester bond of the acyl group attached at the sn-1 position of phosphatidylserines (phospholipase A1 activity) and 1-acyl-2-lysophosphatidylserines (lysophospholipase activity) in the pathway of phosphatidylserines acyl chain remodeling. Cleaves phosphatidylserines exposed on the outer leaflet of the plasma membrane of apoptotic cells producing 2-acyl-1-lysophosphatidylserines, which in turn enhance mast cell activation and histamine production. Has no activity toward other glycerophospholipids including phosphatidylcholines, phosphatidylethanolamines, phosphatidic acids or phosphatidylinositols, or glycerolipids such as triolein. The protein is Phospholipase A1 member A (PLA1A) of Pongo abelii (Sumatran orangutan).